Consider the following 986-residue polypeptide: Bifunctional glutamine synthetase adenylyltransferase/adenylyl-removing enzyme (986 aa).

The interval 1–471 is adenylyl removase; it reads MAEAIERSLS…RYAQLFEQEA (471 aa). An adenylyl transferase region spans residues 475-986; sequence TETGNLVFTG…RIFQGVVAAA (512 aa).

It belongs to the GlnE family. The cofactor is Mg(2+).

It catalyses the reaction [glutamine synthetase]-O(4)-(5'-adenylyl)-L-tyrosine + phosphate = [glutamine synthetase]-L-tyrosine + ADP. It carries out the reaction [glutamine synthetase]-L-tyrosine + ATP = [glutamine synthetase]-O(4)-(5'-adenylyl)-L-tyrosine + diphosphate. In terms of biological role, involved in the regulation of glutamine synthetase GlnA, a key enzyme in the process to assimilate ammonia. When cellular nitrogen levels are high, the C-terminal adenylyl transferase (AT) inactivates GlnA by covalent transfer of an adenylyl group from ATP to specific tyrosine residue of GlnA, thus reducing its activity. Conversely, when nitrogen levels are low, the N-terminal adenylyl removase (AR) activates GlnA by removing the adenylyl group by phosphorolysis, increasing its activity. The regulatory region of GlnE binds the signal transduction protein PII (GlnB) which indicates the nitrogen status of the cell. This Rhizobium meliloti (strain 1021) (Ensifer meliloti) protein is Bifunctional glutamine synthetase adenylyltransferase/adenylyl-removing enzyme.